Reading from the N-terminus, the 526-residue chain is tRNA (guanine(26)-N(2))-dimethyltransferase (526 aa).

Positions 1–10 (MTENVNSSGD) are enriched in polar residues. The segment at 1-20 (MTENVNSSGDSAIKSEDKEE) is disordered. A Trm1 methyltransferase domain is found at 22 to 441 (TVIQEGQAKV…APMHLLWDIY (420 aa)). Arginine 47, arginine 104, and aspartate 122 together coordinate S-adenosyl-L-methionine. 4 residues coordinate Zn(2+): cysteine 286, cysteine 289, cysteine 325, and cysteine 328. Residues 498 to 526 (KGKNWGPRQKAKGSVNSTKAGFQLTEHKE) are disordered.

Belongs to the class I-like SAM-binding methyltransferase superfamily. Trm1 family.

The enzyme catalyses guanosine(26) in tRNA + 2 S-adenosyl-L-methionine = N(2)-dimethylguanosine(26) in tRNA + 2 S-adenosyl-L-homocysteine + 2 H(+). Dimethylates a single guanine residue at position 26 of most tRNAs using S-adenosyl-L-methionine as donor of the methyl groups. The polypeptide is tRNA (guanine(26)-N(2))-dimethyltransferase (trm-1) (Caenorhabditis elegans).